We begin with the raw amino-acid sequence, 184 residues long: Isopentenyl-diphosphate Delta-isomerase (184 aa).

2 residues coordinate Mn(2+): histidine 25 and histidine 32. In terms of domain architecture, Nudix hydrolase spans 30 to 164 (PLHLAFSCWL…PWAFSPWMVL (135 aa)). The active site involves cysteine 67. Histidine 69 is a binding site for Mn(2+). Glutamate 87 contacts Mg(2+). 2 residues coordinate Mn(2+): glutamate 114 and glutamate 116. Glutamate 116 is a catalytic residue.

This sequence belongs to the IPP isomerase type 1 family. Homodimer. Mg(2+) serves as cofactor. It depends on Mn(2+) as a cofactor.

The protein resides in the cytoplasm. The catalysed reaction is isopentenyl diphosphate = dimethylallyl diphosphate. It participates in isoprenoid biosynthesis; dimethylallyl diphosphate biosynthesis; dimethylallyl diphosphate from isopentenyl diphosphate: step 1/1. Catalyzes the 1,3-allylic rearrangement of the homoallylic substrate isopentenyl (IPP) to its highly electrophilic allylic isomer, dimethylallyl diphosphate (DMAPP). This Klebsiella pneumoniae subsp. pneumoniae (strain ATCC 700721 / MGH 78578) protein is Isopentenyl-diphosphate Delta-isomerase.